The sequence spans 228 residues: 7-cyano-7-deazaguanine synthase (228 aa).

Residue 9 to 19 coordinates ATP; that stretch reads LSGGPDSTTVL. Cys-193, Cys-203, Cys-206, and Cys-209 together coordinate Zn(2+).

It belongs to the QueC family. Requires Zn(2+) as cofactor.

The enzyme catalyses 7-carboxy-7-deazaguanine + NH4(+) + ATP = 7-cyano-7-deazaguanine + ADP + phosphate + H2O + H(+). It functions in the pathway purine metabolism; 7-cyano-7-deazaguanine biosynthesis. Catalyzes the ATP-dependent conversion of 7-carboxy-7-deazaguanine (CDG) to 7-cyano-7-deazaguanine (preQ(0)). The chain is 7-cyano-7-deazaguanine synthase from Rickettsia conorii (strain ATCC VR-613 / Malish 7).